We begin with the raw amino-acid sequence, 374 residues long: Flagellar P-ring protein (374 aa).

The N-terminal stretch at Met1–Ala29 is a signal peptide.

This sequence belongs to the FlgI family. In terms of assembly, the basal body constitutes a major portion of the flagellar organelle and consists of four rings (L,P,S, and M) mounted on a central rod.

The protein resides in the periplasm. The protein localises to the bacterial flagellum basal body. In terms of biological role, assembles around the rod to form the L-ring and probably protects the motor/basal body from shearing forces during rotation. This is Flagellar P-ring protein from Nitrobacter hamburgensis (strain DSM 10229 / NCIMB 13809 / X14).